A 334-amino-acid chain; its full sequence is MLKTTIIGASGYTGAELALMVEKHPELTLAGLYVSANSSDAGKCISQLHGKLAGVIEMPVLPLTDPLGVAQDSDVIFLATAHEVSHDLAPLFLQQGCQVFDLSGAFRVKGDDFYTQFYGFAHQHSEWLDKAAYGLAEWNEEAIKASQLVAVAGCYTTAAQLAIKPLLVSQLVDTNQWPVINATSGVSGAGRKASMTNSFCEVSLQPYGIFNHRHQPEIVHHLGCDVIFTPHLGNFKRGILATITMKLQDGVTKEQVAHAFAQAYDRKPAVRLKGDVIPRIQDVEFTPFCDLGWKVQGQHIIVISAIDNLLKGASSQAMQCLNIHYGFSPLTALL.

Cys-154 is a catalytic residue.

Belongs to the NAGSA dehydrogenase family. Type 1 subfamily.

The protein resides in the cytoplasm. It carries out the reaction N-acetyl-L-glutamate 5-semialdehyde + phosphate + NADP(+) = N-acetyl-L-glutamyl 5-phosphate + NADPH + H(+). Its pathway is amino-acid biosynthesis; L-arginine biosynthesis; N(2)-acetyl-L-ornithine from L-glutamate: step 3/4. Functionally, catalyzes the NADPH-dependent reduction of N-acetyl-5-glutamyl phosphate to yield N-acetyl-L-glutamate 5-semialdehyde. The protein is N-acetyl-gamma-glutamyl-phosphate reductase of Vibrio vulnificus (strain YJ016).